A 927-amino-acid polypeptide reads, in one-letter code: Isoleucine--tRNA ligase (927 aa).

The short motif at 57–67 (PYANGHIHIGH) is the 'HIGH' region element. E561 contacts L-isoleucyl-5'-AMP. A 'KMSKS' region motif is present at residues 602-606 (KMSKS). K605 provides a ligand contact to ATP. 4 residues coordinate Zn(2+): C897, C900, C917, and C920.

It belongs to the class-I aminoacyl-tRNA synthetase family. IleS type 1 subfamily. Monomer. Zn(2+) serves as cofactor.

Its subcellular location is the cytoplasm. It catalyses the reaction tRNA(Ile) + L-isoleucine + ATP = L-isoleucyl-tRNA(Ile) + AMP + diphosphate. Its function is as follows. Catalyzes the attachment of isoleucine to tRNA(Ile). As IleRS can inadvertently accommodate and process structurally similar amino acids such as valine, to avoid such errors it has two additional distinct tRNA(Ile)-dependent editing activities. One activity is designated as 'pretransfer' editing and involves the hydrolysis of activated Val-AMP. The other activity is designated 'posttransfer' editing and involves deacylation of mischarged Val-tRNA(Ile). The chain is Isoleucine--tRNA ligase from Syntrophotalea carbinolica (strain DSM 2380 / NBRC 103641 / GraBd1) (Pelobacter carbinolicus).